The sequence spans 510 residues: Putative glycerol-3-phosphate transporter 3 (510 aa).

12 consecutive transmembrane segments (helical) span residues 31-51 (LSFK…YIAF), 91-111 (ALLG…MFVA), 123-143 (FLTI…VAFW), 158-178 (LAGW…GNWF), 185-205 (VIMG…TLIA), 217-237 (FVGP…FLPV), 279-299 (VGFL…CLFF), 331-351 (GNLS…AGYF), 355-375 (LDGR…ALFL), 378-398 (IYGH…GLFV), 436-456 (TGSV…AISW), and 459-479 (VFYM…TLII).

This sequence belongs to the major facilitator superfamily. Organophosphate:Pi antiporter (OPA) (TC 2.A.1.4) family.

The protein resides in the membrane. This is Putative glycerol-3-phosphate transporter 3 from Arabidopsis thaliana (Mouse-ear cress).